The chain runs to 469 residues: Nuclear hormone receptor family member nhr-154 (469 aa).

The nuclear receptor DNA-binding region spans 80 to 159; that stretch reads PSKCLVCRNP…VGMNPMAIQA (80 aa). 2 consecutive NR C4-type zinc fingers follow at residues 83-103 and 119-142; these read CLVC…CNGC and CAKQ…CRAC. Positions 230-459 constitute an NR LBD domain; that stretch reads LDSKPVLVVT…KMGTTFRKCI (230 aa).

Belongs to the nuclear hormone receptor family.

The protein resides in the nucleus. Functionally, orphan nuclear receptor. The chain is Nuclear hormone receptor family member nhr-154 (nhr-154) from Caenorhabditis elegans.